Here is a 207-residue protein sequence, read N- to C-terminus: Porin MspD (207 aa).

The first 24 residues, 1–24 (MRYLVMMFALLVSVTLVSPRPANA), serve as a signal peptide directing secretion.

It belongs to the mycobacterial porin (TC 1.B.24) family. Octamers. Probably forms a goblet with the wide end on the exterior of the outer membrane and a central channel. It is not known if mixed oligomers of MspD with other Msp subunits form in vivo.

The protein localises to the cell outer membrane. It is found in the secreted. The protein resides in the cell wall. Functionally, a backup porin induced when MspA, the major porin, is deleted. It probably forms a water-filled channel which favors the permeation of cations. There are about 2400 porins in wild-type, 800 in an mspA deletion and 150 in a double mspA-mspC deletion. This is Porin MspD (mspD) from Mycolicibacterium smegmatis (strain ATCC 700084 / mc(2)155) (Mycobacterium smegmatis).